The chain runs to 590 residues: ATP-dependent zinc metalloprotease FtsH 1 (590 aa).

Over 1-8 the chain is Cytoplasmic; the sequence is MLKLTKKQ. The chain crosses the membrane as a helical span at residues 9–29; that stretch reads LIIVLGIAIVVVSAIGYAVYT. The Extracellular portion of the chain corresponds to 30 to 103; that stretch reads QYFNEDKLEI…QVRETTDQYS (74 aa). Residues 104–124 traverse the membrane as a helical segment; the sequence is VVQVITFVVLIGGFIGVAIFL. Over 125-590 the chain is Cytoplasmic; it reads SKKNATQTSK…NEIFSGFQSM (466 aa). 195 to 202 lines the ATP pocket; the sequence is GSPGTGKT. His-418 contacts Zn(2+). Glu-419 is an active-site residue. Residues His-422 and Asp-496 each contribute to the Zn(2+) site.

It in the central section; belongs to the AAA ATPase family. The protein in the C-terminal section; belongs to the peptidase M41 family. As to quaternary structure, homohexamer. It depends on Zn(2+) as a cofactor.

The protein localises to the cell membrane. Acts as a processive, ATP-dependent zinc metallopeptidase for both cytoplasmic and membrane proteins. Plays a role in the quality control of integral membrane proteins. The chain is ATP-dependent zinc metalloprotease FtsH 1 from Alkaliphilus metalliredigens (strain QYMF).